A 616-amino-acid polypeptide reads, in one-letter code: MCGIIGYSGPRPAAEVLLKGLERLEYRGYDSAGIAVVTDKAYIESVKKSGKLNVLKTCLERRTTPIVGSTGIGHTRWATHGEPSDRNAHPHMDTEQSLAIVHNGIIENSDVLKRELLASGKSFTSETDTEVVAHLLSDAFKKTQDLVQAFVEVTQRLEGAFAVVAIHKDQPNTIVAAKNNSPLLLGFGQGENFLASDIAAFAEYTQRVANIDQERIVALSGDSVYITDFAGHPVDYEVHTVSWHPASVDSSGWSSFMLKEIFEEPQAVENTLKGRTEDGTVILPECDHIRDDLLAIDRVVLVGCGTAAYAAMTASYSIEAWAGLPVSVELSHEFRYREPVLNSKTLAVFISQSGETMDSLMAVRYARQAGVKTISVCNVMDSSIPKESHAVIYTKAGPEVAVASTKSFVCQIVVLYLLALYLGQLRGFRSIFPRQKAVCELNRLPVKLKQVLEIYESVRQLAHWMSDSRSILFLGRHAGYPIALEAALKLKELAYIHAEGFAAGELKHGPIALIEPGQPVFVIVPSPVGSPILHAKVISNIREIKSRGARIIAIAAEGDSAVLPHADSVLRIPLTRYSFEPLLSIVPLQIFALELAADKGFDVDRPRNLAKSVTVE.

C2 acts as the Nucleophile; for GATase activity in catalysis. The region spanning 2–222 (CGIIGYSGPR…QERIVALSGD (221 aa)) is the Glutamine amidotransferase type-2 domain. The disordered stretch occupies residues 70–89 (TGIGHTRWATHGEPSDRNAH). SIS domains lie at 289–428 (IRDD…LRGF) and 461–606 (LAHW…VDRP). The active-site For Fru-6P isomerization activity is K611.

Homodimer.

The protein resides in the cytoplasm. The enzyme catalyses D-fructose 6-phosphate + L-glutamine = D-glucosamine 6-phosphate + L-glutamate. Its function is as follows. Catalyzes the first step in hexosamine metabolism, converting fructose-6P into glucosamine-6P using glutamine as a nitrogen source. The polypeptide is Glutamine--fructose-6-phosphate aminotransferase [isomerizing] (Tropheryma whipplei (strain TW08/27) (Whipple's bacillus)).